The primary structure comprises 334 residues: Spermidine synthase 1 (334 aa).

A compositionally biased stretch (basic and acidic residues) spans 1–16 (MDAKETSATDLKRPRE). The segment at 1-35 (MDAKETSATDLKRPREEDDNGGAATMETENGDQKK) is disordered. In terms of domain architecture, PABS spans 45 to 282 (PGWFSEMSPM…GVIGFMLCST (238 aa)). Gln-76 contributes to the S-adenosyl 3-(methylsulfanyl)propylamine binding site. Tyr-106 serves as a coordination point for putrescine. Residues Gln-107, Asp-131, Glu-151, 182-183 (DG), and Asp-201 each bind S-adenosyl 3-(methylsulfanyl)propylamine. The active-site Proton acceptor is Asp-201. Putrescine is bound by residues 201–204 (DSSD) and Tyr-270.

The protein belongs to the spermidine/spermine synthase family. In terms of assembly, homotetramer and heterodimer. Component of a multiprotein complex. Interacts with SPMS and SPDSYN2.

The enzyme catalyses S-adenosyl 3-(methylsulfanyl)propylamine + putrescine = S-methyl-5'-thioadenosine + spermidine + H(+). Its pathway is amine and polyamine biosynthesis; spermidine biosynthesis; spermidine from putrescine: step 1/1. The sequence is that of Spermidine synthase 1 (SPDSYN1) from Arabidopsis thaliana (Mouse-ear cress).